The primary structure comprises 186 residues: Casparian strip membrane protein 1 (186 aa).

Over 1 to 26 (MKSSPAELISEAKSSTQNSKMKRAVS) the chain is Cytoplasmic. The chain crosses the membrane as a helical span at residues 27–47 (VLDFILRLIAVVATLASAIAM). Over 48-74 (GTTDESLPFFTQFIRFRAEYDDLPTLR) the chain is Extracellular. Residues 75-95 (LFVVASAFASGYLILSLPLSI) traverse the membrane as a helical segment. Residues 96–107 (LHITRSSARRTR) are Cytoplasmic-facing. The chain crosses the membrane as a helical span at residues 108–128 (VILIILDMVMLTSLTAASSAA). The Extracellular portion of the chain corresponds to 129–161 (AAIVYLAHKGNAKANWFAFCQQYDSFCERISGS). A helical transmembrane segment spans residues 162–182 (LIGSFIAIPLFIMLILFSALV). At 183–186 (LSKR) the chain is on the cytoplasmic side.

The protein belongs to the Casparian strip membrane proteins (CASP) family. Homodimer and heterodimers.

It is found in the cell membrane. In terms of biological role, regulates membrane-cell wall junctions and localized cell wall deposition. Required for establishment of the Casparian strip membrane domain (CSD) and the subsequent formation of Casparian strips, a cell wall modification of the root endodermis that determines an apoplastic barrier between the intraorganismal apoplasm and the extraorganismal apoplasm and prevents lateral diffusion. The protein is Casparian strip membrane protein 1 of Lotus japonicus (Lotus corniculatus var. japonicus).